Consider the following 288-residue polypeptide: Bifunctional protein FolD (288 aa).

NADP(+) is bound by residues 171–173 (GRS), serine 196, and threonine 237.

This sequence belongs to the tetrahydrofolate dehydrogenase/cyclohydrolase family. In terms of assembly, homodimer.

The enzyme catalyses (6R)-5,10-methylene-5,6,7,8-tetrahydrofolate + NADP(+) = (6R)-5,10-methenyltetrahydrofolate + NADPH. It catalyses the reaction (6R)-5,10-methenyltetrahydrofolate + H2O = (6R)-10-formyltetrahydrofolate + H(+). Its pathway is one-carbon metabolism; tetrahydrofolate interconversion. In terms of biological role, catalyzes the oxidation of 5,10-methylenetetrahydrofolate to 5,10-methenyltetrahydrofolate and then the hydrolysis of 5,10-methenyltetrahydrofolate to 10-formyltetrahydrofolate. The sequence is that of Bifunctional protein FolD from Elusimicrobium minutum (strain Pei191).